We begin with the raw amino-acid sequence, 341 residues long: Malate dehydrogenase 1, mitochondrial (341 aa).

A mitochondrion-targeting transit peptide spans 1-22 (MFRSMLVRSSASAKQAVIRRSF). NAD(+) contacts are provided by residues 36–42 (GAAGGIG) and aspartate 62. 2 residues coordinate substrate: arginine 109 and arginine 115. Residues asparagine 122 and 145 to 147 (ISN) contribute to the NAD(+) site. 2 residues coordinate substrate: asparagine 147 and arginine 181. Histidine 205 (proton acceptor) is an active-site residue. Methionine 256 lines the NAD(+) pocket.

This sequence belongs to the LDH/MDH superfamily. MDH type 1 family. Homodimer. In terms of processing, forms intramolecular disulfide bonds. In terms of tissue distribution, expressed in rosette leaves.

The protein resides in the mitochondrion matrix. It catalyses the reaction (S)-malate + NAD(+) = oxaloacetate + NADH + H(+). With respect to regulation, negatively regulated by ATP. Not redox-regulated. The formation of intramolecular disulfide bonds does not alter enzymatic activity. Functionally, catalyzes a reversible NAD-dependent dehydrogenase reaction involved in central metabolism and redox homeostasis between organelle compartments. Required for carbon dioxide and energy partitioning in leaves. May limit photorespiration during the dark phase. Its activity is essential to shuttle reductants out from the mitochondria to support the photorespiratory flux. Can convert 2-oxoglutarate to (S)-2-hydroxyglutarate in vitro. In Arabidopsis thaliana (Mouse-ear cress), this protein is Malate dehydrogenase 1, mitochondrial.